A 1266-amino-acid chain; its full sequence is Neuronal-glial cell adhesion molecule (1266 aa).

A signal peptide spans 1-20; the sequence is MALPMVGLLLLLLLGGPGAA. Topologically, residues 21-1130 are extracellular; that stretch reads ITIPPEYGAH…PQPGGGVCTK (1110 aa). Ig-like C2-type domains lie at 36-128, 135-221, 236-322, 327-413, 418-506, and 510-597; these read PELT…NVIA, PKEK…KEPL, PRLL…HSVT, PYWV…AFLH, PLRM…ALLE, and PTRI…AQLR. 4 cysteine pairs are disulfide-bonded: Cys58-Cys110, Cys154-Cys205, Cys260-Cys306, and Cys348-Cys397. N-linked (GlcNAc...) asparagine glycosylation is present at Asn97. 5 N-linked (GlcNAc...) asparagine glycosylation sites follow: Asn288, Asn390, Asn434, Asn472, and Asn498. An intrachain disulfide couples Cys441 to Cys490. An intrachain disulfide couples Cys532 to Cys581. Fibronectin type-III domains follow at residues 603-698, 700-804, 809-930, 934-1021, and 1022-1118; these read PSRD…TPPA, PERN…SGED, YPEN…TPEG, PPEE…TKPE, and PPSP…TNGT. A disordered region spans residues 685–710; sequence EHHAPSAPIETPPAAPERNPGGVHGE. Residues Asn712 and Asn819 are each glycosylated (N-linked (GlcNAc...) asparagine). Positions 857–882 are disordered; sequence SRRQAPPDPPQIPQSPAEDPPPFPPV. Residues 862-881 are compositionally biased toward pro residues; that stretch reads PPDPPQIPQSPAEDPPPFPP. Positions 914-916 match the Cell attachment site motif; that stretch reads RGD. Positions 1004-1025 are disordered; it reads STPRERPALQTVGSTKPEPPSP. Residues Asn1061, Asn1075, Asn1100, and Asn1116 are each glycosylated (N-linked (GlcNAc...) asparagine). The helical transmembrane segment at 1131-1153 threads the bilayer; the sequence is GWFIGFVSSVVLLLLILLILCFI. Topologically, residues 1154-1266 are cytoplasmic; it reads KRSKGGKYSV…ASPCAGPPLD (113 aa). Residues 1163 to 1195 show a composition bias toward basic and acidic residues; it reads VKDKEDTQVDSEARPMKDETFGEYRSLESEAEK. Positions 1163-1266 are disordered; it reads VKDKEDTQVD…ASPCAGPPLD (104 aa). Residues 1199–1211 are compositionally biased toward gly residues; sequence SGSGAGSGVGSPG.

Belongs to the immunoglobulin superfamily. L1/neurofascin/NgCAM family. Binds to itself and to axonin 1. Brain.

The protein resides in the cell membrane. Its function is as follows. Mediates the adhesion of neurons to neurons and neurons to glia. It is involved in neuronal migration, neurite fasciculation and outgrowth. The polypeptide is Neuronal-glial cell adhesion molecule (Gallus gallus (Chicken)).